Reading from the N-terminus, the 511-residue chain is Histidine ammonia-lyase (511 aa).

Positions 142–144 form a cross-link, 5-imidazolinone (Ala-Gly); sequence ASG. At Ser-143 the chain carries 2,3-didehydroalanine (Ser).

It belongs to the PAL/histidase family. Contains an active site 4-methylidene-imidazol-5-one (MIO), which is formed autocatalytically by cyclization and dehydration of residues Ala-Ser-Gly.

The protein resides in the cytoplasm. It carries out the reaction L-histidine = trans-urocanate + NH4(+). It participates in amino-acid degradation; L-histidine degradation into L-glutamate; N-formimidoyl-L-glutamate from L-histidine: step 1/3. In Rhizobium rhizogenes (strain K84 / ATCC BAA-868) (Agrobacterium radiobacter), this protein is Histidine ammonia-lyase.